The following is a 725-amino-acid chain: Phosphoribosylformylglycinamidine synthase subunit PurL (725 aa).

Histidine 41 is a catalytic residue. Positions 44 and 83 each coordinate ATP. Glutamate 85 is a Mg(2+) binding site. Residues 86 to 89 (SHNH) and arginine 108 contribute to the substrate site. The active-site Proton acceptor is the histidine 87. Residue aspartate 109 coordinates Mg(2+). Glutamine 231 contacts substrate. Residue aspartate 259 coordinates Mg(2+). 303 to 305 (ESQ) contacts substrate. 2 residues coordinate ATP: aspartate 485 and glycine 522. Asparagine 523 serves as a coordination point for Mg(2+). Residue serine 525 coordinates substrate.

Belongs to the FGAMS family. As to quaternary structure, monomer. Part of the FGAM synthase complex composed of 1 PurL, 1 PurQ and 2 PurS subunits.

It is found in the cytoplasm. It carries out the reaction N(2)-formyl-N(1)-(5-phospho-beta-D-ribosyl)glycinamide + L-glutamine + ATP + H2O = 2-formamido-N(1)-(5-O-phospho-beta-D-ribosyl)acetamidine + L-glutamate + ADP + phosphate + H(+). It participates in purine metabolism; IMP biosynthesis via de novo pathway; 5-amino-1-(5-phospho-D-ribosyl)imidazole from N(2)-formyl-N(1)-(5-phospho-D-ribosyl)glycinamide: step 1/2. Its function is as follows. Part of the phosphoribosylformylglycinamidine synthase complex involved in the purines biosynthetic pathway. Catalyzes the ATP-dependent conversion of formylglycinamide ribonucleotide (FGAR) and glutamine to yield formylglycinamidine ribonucleotide (FGAM) and glutamate. The FGAM synthase complex is composed of three subunits. PurQ produces an ammonia molecule by converting glutamine to glutamate. PurL transfers the ammonia molecule to FGAR to form FGAM in an ATP-dependent manner. PurS interacts with PurQ and PurL and is thought to assist in the transfer of the ammonia molecule from PurQ to PurL. In Thermus thermophilus (strain ATCC BAA-163 / DSM 7039 / HB27), this protein is Phosphoribosylformylglycinamidine synthase subunit PurL.